Here is a 201-residue protein sequence, read N- to C-terminus: Glutathione peroxidase 1 (201 aa).

The residue at position 32 (S32) is a Phosphoserine. U47 is an active-site residue. U47 is a non-standard amino acid (selenocysteine). 3 positions are modified to N6-acetyllysine; alternate: K86, K112, and K146. N6-succinyllysine; alternate is present on residues K86, K112, and K146. 2 positions are modified to phosphoserine: S195 and S199.

Belongs to the glutathione peroxidase family. As to quaternary structure, homotetramer. Interacts with MIEN1. Post-translationally, during periods of oxidative stress, Sec-47 may react with a superoxide radical, irreversibly lose hydroselenide and be converted to dehydroalanine.

Its subcellular location is the cytoplasm. The protein resides in the mitochondrion. The catalysed reaction is 2 glutathione + H2O2 = glutathione disulfide + 2 H2O. It carries out the reaction a hydroperoxy polyunsaturated fatty acid + 2 glutathione = a hydroxy polyunsaturated fatty acid + glutathione disulfide + H2O. The enzyme catalyses tert-butyl hydroperoxide + 2 glutathione = tert-butanol + glutathione disulfide + H2O. It catalyses the reaction cumene hydroperoxide + 2 glutathione = 2-phenylpropan-2-ol + glutathione disulfide + H2O. The catalysed reaction is (13S)-hydroperoxy-(9Z,11E)-octadecadienoate + 2 glutathione = (13S)-hydroxy-(9Z,11E)-octadecadienoate + glutathione disulfide + H2O. It carries out the reaction (9S)-hydroperoxy-(10E,12Z)-octadecadienoate + 2 glutathione = (9S)-hydroxy-(10E,12Z)-octadecadienoate + glutathione disulfide + H2O. The enzyme catalyses (5S)-hydroperoxy-(6E,8Z,11Z,14Z)-eicosatetraenoate + 2 glutathione = (5S)-hydroxy-(6E,8Z,11Z,14Z)-eicosatetraenoate + glutathione disulfide + H2O. It catalyses the reaction (12S)-hydroperoxy-(5Z,8Z,10E,14Z)-eicosatetraenoate + 2 glutathione = (12S)-hydroxy-(5Z,8Z,10E,14Z)-eicosatetraenoate + glutathione disulfide + H2O. The catalysed reaction is (12R)-hydroperoxy-(5Z,8Z,10E,14Z)-eicosatetraenoate + 2 glutathione = (12R)-hydroxy-(5Z,8Z,10E,14Z)-eicosatetraenoate + glutathione disulfide + H2O. It carries out the reaction (15S)-hydroperoxy-(5Z,8Z,11Z,13E)-eicosatetraenoate + 2 glutathione = (15S)-hydroxy-(5Z,8Z,11Z,13E)-eicosatetraenoate + glutathione disulfide + H2O. The enzyme catalyses (5S)-hydroperoxy-(6E,8Z,11Z,14Z,17Z)-eicosapentaenoate + 2 glutathione = (5S)-hydroxy-(6E,8Z,11Z,14Z,17Z)-eicosapentaenoate + glutathione disulfide + H2O. It catalyses the reaction (12S)-hydroperoxy-(5Z,8Z,10E,14Z,17Z)-eicosapentaenoate + 2 glutathione = (12S)-hydroxy-(5Z,8Z,10E,14Z,17Z)-eicosapentaenoate + glutathione disulfide + H2O. The catalysed reaction is (15S)-hydroperoxy-(5Z,8Z,11Z,13E,17Z)-eicosapentaenoate + 2 glutathione = (15S)-hydroxy-(5Z,8Z,11Z,13E,17Z)-eicosapentaenoate + glutathione disulfide + H2O. It carries out the reaction (15S)-hydroperoxy-(11Z,13E)-eicosadienoate + 2 glutathione = (15S)-hydroxy-(11Z,13E)-eicosadienoate + glutathione disulfide + H2O. The enzyme catalyses (17S)-hydroperoxy-(4Z,7Z,10Z,13Z,15E,19Z)-docosahexaenoate + 2 glutathione = (17S)-hydroxy-(4Z,7Z,10Z,13Z,15E,19Z)-docosahexaenoate + glutathione disulfide + H2O. In terms of biological role, catalyzes the reduction of hydroperoxides in a glutathione-dependent manner thus regulating cellular redox homeostasis. Can reduce small soluble hydroperoxides such as H2O2, cumene hydroperoxide and tert-butyl hydroperoxide, as well as several fatty acid-derived hydroperoxides. In platelets catalyzes the reduction of 12-hydroperoxyeicosatetraenoic acid, the primary product of the arachidonate 12-lipoxygenase pathway. This chain is Glutathione peroxidase 1 (GPX1), found in Pongo pygmaeus (Bornean orangutan).